A 248-amino-acid chain; its full sequence is Triosephosphate isomerase (248 aa).

Positions 10 and 12 each coordinate substrate. Histidine 95 functions as the Electrophile in the catalytic mechanism. The active-site Proton acceptor is glutamate 165.

This sequence belongs to the triosephosphate isomerase family. As to quaternary structure, homodimer.

The catalysed reaction is D-glyceraldehyde 3-phosphate = dihydroxyacetone phosphate. Its pathway is carbohydrate biosynthesis; gluconeogenesis. It functions in the pathway carbohydrate degradation; glycolysis; D-glyceraldehyde 3-phosphate from glycerone phosphate: step 1/1. The chain is Triosephosphate isomerase (tpi-1) from Neurospora crassa (strain ATCC 24698 / 74-OR23-1A / CBS 708.71 / DSM 1257 / FGSC 987).